A 188-amino-acid chain; its full sequence is dCTP deaminase (188 aa).

DCTP is bound by residues 111-116 (KSTYAR), 135-137 (TLE), Gln156, Tyr170, and Gln180. Glu137 serves as the catalytic Proton donor/acceptor.

It belongs to the dCTP deaminase family. As to quaternary structure, homotrimer.

The catalysed reaction is dCTP + H2O + H(+) = dUTP + NH4(+). Its pathway is pyrimidine metabolism; dUMP biosynthesis; dUMP from dCTP (dUTP route): step 1/2. Its function is as follows. Catalyzes the deamination of dCTP to dUTP. In Dichelobacter nodosus (strain VCS1703A), this protein is dCTP deaminase.